Consider the following 480-residue polypeptide: UDP-N-acetylmuramate--L-alanine ligase (480 aa).

127-133 (GTHGKTT) lines the ATP pocket.

It belongs to the MurCDEF family.

Its subcellular location is the cytoplasm. It catalyses the reaction UDP-N-acetyl-alpha-D-muramate + L-alanine + ATP = UDP-N-acetyl-alpha-D-muramoyl-L-alanine + ADP + phosphate + H(+). The protein operates within cell wall biogenesis; peptidoglycan biosynthesis. In terms of biological role, cell wall formation. The sequence is that of UDP-N-acetylmuramate--L-alanine ligase from Blochmanniella floridana.